The primary structure comprises 175 residues: Nicotinamide-nucleotide adenylyltransferase 1 (175 aa).

It belongs to the archaeal NMN adenylyltransferase family.

It localises to the cytoplasm. It carries out the reaction beta-nicotinamide D-ribonucleotide + ATP + H(+) = diphosphate + NAD(+). The protein operates within cofactor biosynthesis; NAD(+) biosynthesis; NAD(+) from nicotinamide D-ribonucleotide: step 1/1. This chain is Nicotinamide-nucleotide adenylyltransferase 1, found in Sulfolobus acidocaldarius (strain ATCC 33909 / DSM 639 / JCM 8929 / NBRC 15157 / NCIMB 11770).